Reading from the N-terminus, the 435-residue chain is Xylose isomerase (435 aa).

Catalysis depends on residues His-100 and Asp-103. Mg(2+) contacts are provided by Glu-231, Glu-267, His-270, Asp-295, Asp-306, Asp-308, and Asp-338.

It belongs to the xylose isomerase family. In terms of assembly, homotetramer. Mg(2+) is required as a cofactor.

It localises to the cytoplasm. The catalysed reaction is alpha-D-xylose = alpha-D-xylulofuranose. The chain is Xylose isomerase from Brucella suis biovar 1 (strain 1330).